A 963-amino-acid polypeptide reads, in one-letter code: Importin-13 (963 aa).

HEAT repeat units lie at residues 24-54 (ENVEKALHQLYYDPNIENKNLAQKWLMQAQA), 56-88 (PQAWHFSWQLLQPDKVPEIQYFGASALHIKISR), 95-135 (TDQY…LSMM), 142-179 (AVADMVRLFQAEDSPVDSQGRCLALLELLTVLPEEFQT), 194-231 (LAVECGAVFPLLEQLLQQPSSPSCVRQKVLKCFSSWVQ), 236-268 (LQDCEALIQAAFAALQDSELFDSSVEAIVNAIS), 276-325 (VNTL…ALLD), 330-372 (WQSF…DDIL), 375-438 (EAEK…YEML), 440-476 (AELLSNLYDKLGRLLTSSEEPYSWQHTEALLYGFQSI), 487-522 (VVPGLIGLIPRISISNVQLADTVMFTIGALSEWLAD), 524-558 (PVMINSVLPLVLHALGNPELSISSVSTLKKICREC), 562-600 (LPPYAANIVAVSQDVLMKQIHKTSQCMWLMQALGFLLSA), 603-648 (VEEI…SNLF), 676-716 (PVVV…VKTL), 720-754 (FAPMVPQLCEMLGRMYSTIPQASALDLTRQLVHIF), 761-803 (FPPI…ALKR), 815-845 (VKAVFQCAVLALKFPEAPTVKASCGFFTELL), 860-893 (EDGRMLLIAVLEAIGGQASRSLMDCFADILFALN), and 897-931 (FSLLSVWIKEALQAPGFPSARLSPEQKDTFSQQIL). The Importin N-terminal domain maps to 45 to 111 (AQKWLMQAQA…KAQLFTQITR (67 aa)).

The protein belongs to the importin beta family. Interacts with UBC9, RAN, RBM8A, eIF-1A and PAX6.

The protein localises to the cytoplasm. It is found in the nucleus. Functionally, functions in nuclear protein import as nuclear transport receptor. Serves as receptor for nuclear localization signals (NLS) in cargo substrates. Is thought to mediate docking of the importin/substrate complex to the nuclear pore complex (NPC) through binding to nucleoporin and the complex is subsequently translocated through the pore by an energy requiring, Ran-dependent mechanism. At the nucleoplasmic side of the NPC, Ran binds to the importin, the importin/substrate complex dissociates and importin is re-exported from the nucleus to the cytoplasm where GTP hydrolysis releases Ran. The directionality of nuclear import is thought to be conferred by an asymmetric distribution of the GTP- and GDP-bound forms of Ran between the cytoplasm and nucleus. Mediates the nuclear import of UBC9, the RBM8A/MAGOH complex, PAX6 and probably other members of the paired homeobox family. Also mediates nuclear export of eIF-1A, and the cytoplasmic release of eIF-1A is triggered by the loading of import substrates onto IPO13. This is Importin-13 (IPO13) from Bos taurus (Bovine).